The sequence spans 326 residues: Microtubule-associated protein RP/EB family member 2 (326 aa).

Phosphoserine is present on S9. Positions 56–158 constitute a Calponin-homology (CH) domain; that stretch reads TMSRHDIIAW…FIQWFKKFYD (103 aa). Position 166 is a phosphotyrosine (Y166). Disordered regions lie at residues 170–239 and 298–326; these read EARQ…DKDL and ASDE…QEEY. The segment at 186–326 is DCTN1-binding; sequence QIFNLPKKSH…EQQPQQQEEY (141 aa). The segment covering 199–233 has biased composition (low complexity); sequence SPTAGAAKSSPASKPGSTPSRPSSAKRASSSGSAS. S218 and S235 each carry phosphoserine. The region spanning 235–305 is the EB1 C-terminal domain; the sequence is SDKDLETQVI…LYASDEHEGH (71 aa). The segment at 258–301 is APC-binding; sequence EGVEKERDFYFGKLREIELLCQEHGQENDDLVQRLMDVLYASDE. A compositionally biased stretch (basic and acidic residues) spans 299-316; sequence SDEHEGHPEEPEAEEQVH. Over residues 317–326 the composition is skewed to low complexity; sequence EQQPQQQEEY.

This sequence belongs to the MAPRE family. As to quaternary structure, interacts with DCTN1. Interacts with APC (via C-terminal). Interacts with monomeric and polymerized tubulin. Interacts with SLAIN1. Interacts (via the N-terminal region) with BAG1. Interacts with ASB14. Interacts with HAX1; this interaction is essential for epidermal cell migration. Post-translationally, phosphorylated at Ser-235 by CK2 leading to enhanced cell adhesion. Phosphorylated by CDK1 and AURKB during mitosis reduces the binding affinity of MAPRE2 for microtubules. In terms of processing, ubiquitinated in an ASB14-dependent manner; leading to proteasomal degradation.

It localises to the cytoplasm. It is found in the cytoskeleton. In terms of biological role, adapter protein that is involved in microtubule polymerization, and spindle function by stabilizing microtubules and anchoring them at centrosomes. Therefore, ensures mitotic progression and genome stability. Acts as a central regulator of microtubule reorganization in apico-basal epithelial differentiation. Plays a role during oocyte meiosis by regulating microtubule dynamics. Participates in neurite growth by interacting with plexin B3/PLXNB3 and microtubule reorganization during apico-basal epithelial differentiation. Also plays an essential role for cell migration and focal adhesion dynamics. Mechanistically, recruits HAX1 to microtubules in order to regulate focal adhesion dynamics. The protein is Microtubule-associated protein RP/EB family member 2 (MAPRE2) of Bos taurus (Bovine).